The sequence spans 105 residues: Large ribosomal subunit protein uL24 (105 aa).

Belongs to the universal ribosomal protein uL24 family. In terms of assembly, part of the 50S ribosomal subunit.

In terms of biological role, one of two assembly initiator proteins, it binds directly to the 5'-end of the 23S rRNA, where it nucleates assembly of the 50S subunit. One of the proteins that surrounds the polypeptide exit tunnel on the outside of the subunit. This is Large ribosomal subunit protein uL24 from Xylella fastidiosa (strain 9a5c).